A 133-amino-acid chain; its full sequence is Transcription antitermination protein NusB (133 aa).

This sequence belongs to the NusB family.

Functionally, involved in transcription antitermination. Required for transcription of ribosomal RNA (rRNA) genes. Binds specifically to the boxA antiterminator sequence of the ribosomal RNA (rrn) operons. The polypeptide is Transcription antitermination protein NusB (Shouchella clausii (strain KSM-K16) (Alkalihalobacillus clausii)).